Reading from the N-terminus, the 1019-residue chain is Collagen alpha-1(VI) chain (1019 aa).

A signal peptide spans 1 to 19 (MGLHDSFLALLLLLGGAWA). Residues 37–233 (DLFFVLDTSE…LDVEETINNI (197 aa)) form the VWFA 1 domain. Asn212 carries an N-linked (GlcNAc...) asparagine glycan. The disordered stretch occupies residues 248 to 588 (FECHPPRGPP…GPPGPVGPPG (341 aa)). A compositionally biased stretch (pro residues) spans 253–262 (PRGPPGPPGD). 2 stretches are compositionally biased toward basic and acidic residues: residues 299-332 (KGDK…DGMK) and 370-380 (GKGEPGEDGKP). Residues 427-436 (ERGPPGSPGD) show a composition bias toward low complexity. The Cell attachment site motif lies at 476–478 (RGD). Asn514 carries an N-linked (GlcNAc...) asparagine glycan. Residues 529–531 (RGD) carry the Cell attachment site motif. The N-linked (GlcNAc...) asparagine glycan is linked to Asn535. Residues 577–588 (RPGPPGPVGPPG) show a composition bias toward pro residues. VWFA domains are found at residues 613–800 (DLLF…LQNI) and 824–1012 (DIML…YQTV). N-linked (GlcNAc...) asparagine glycosylation is found at Asn799 and Asn887.

It belongs to the type VI collagen family. As to quaternary structure, trimers composed of three different chains: alpha 1(VI), alpha 2(VI), and alpha 3(VI). Prolines at the third position of the tripeptide repeating unit (G-X-Y) are hydroxylated in some or all of the chains.

Its subcellular location is the secreted. It is found in the extracellular space. The protein localises to the extracellular matrix. Collagen VI acts as a cell-binding protein. In Gallus gallus (Chicken), this protein is Collagen alpha-1(VI) chain (COL6A1).